Reading from the N-terminus, the 314-residue chain is tRNA dimethylallyltransferase (314 aa).

9 to 16 (GPTAVGKT) contributes to the ATP binding site. 11–16 (TAVGKT) contributes to the substrate binding site. The interaction with substrate tRNA stretch occupies residues 34–37 (DSMQ).

Belongs to the IPP transferase family. As to quaternary structure, monomer. It depends on Mg(2+) as a cofactor.

The catalysed reaction is adenosine(37) in tRNA + dimethylallyl diphosphate = N(6)-dimethylallyladenosine(37) in tRNA + diphosphate. In terms of biological role, catalyzes the transfer of a dimethylallyl group onto the adenine at position 37 in tRNAs that read codons beginning with uridine, leading to the formation of N6-(dimethylallyl)adenosine (i(6)A). The protein is tRNA dimethylallyltransferase of Clostridium tetani (strain Massachusetts / E88).